Here is an 89-residue protein sequence, read N- to C-terminus: Cell division protein FtsL (89 aa).

At 1–6 (MAMNKL) the chain is on the cytoplasmic side. The helical transmembrane segment at 7–24 (NFLLLLAVCVSAFSVVMQ) threads the bilayer. The Periplasmic segment spans residues 25 to 89 (QNQYRLNFTA…GNTFMVEHQR (65 aa)). Residues 33 to 73 (TALDKAKKQEIALEQDYAQMRLQQARLANHEAIRAAAEKQN) are a coiled coil.

Belongs to the FtsL family. Part of a complex composed of FtsB, FtsL and FtsQ.

Its subcellular location is the cell inner membrane. In terms of biological role, essential cell division protein. May link together the upstream cell division proteins, which are predominantly cytoplasmic, with the downstream cell division proteins, which are predominantly periplasmic. This chain is Cell division protein FtsL, found in Neisseria meningitidis serogroup B (strain ATCC BAA-335 / MC58).